Consider the following 252-residue polypeptide: Adenosylcobinamide-GDP ribazoletransferase (252 aa).

The next 7 membrane-spanning stretches (helical) occupy residues 4–24 (LFKG…PYVE), 38–58 (PIIG…INYL), 60–80 (ISIV…TGML), 113–133 (FSVI…HSFL), 141–161 (ILMF…ITII), 190–210 (LVCI…LLIV), and 232–252 (VAGF…CLFT).

Belongs to the CobS family. It depends on Mg(2+) as a cofactor.

It is found in the cell membrane. The catalysed reaction is alpha-ribazole + adenosylcob(III)inamide-GDP = adenosylcob(III)alamin + GMP + H(+). The enzyme catalyses alpha-ribazole 5'-phosphate + adenosylcob(III)inamide-GDP = adenosylcob(III)alamin 5'-phosphate + GMP + H(+). It functions in the pathway cofactor biosynthesis; adenosylcobalamin biosynthesis; adenosylcobalamin from cob(II)yrinate a,c-diamide: step 7/7. Functionally, joins adenosylcobinamide-GDP and alpha-ribazole to generate adenosylcobalamin (Ado-cobalamin). Also synthesizes adenosylcobalamin 5'-phosphate from adenosylcobinamide-GDP and alpha-ribazole 5'-phosphate. The protein is Adenosylcobinamide-GDP ribazoletransferase of Clostridium botulinum (strain Alaska E43 / Type E3).